A 343-amino-acid polypeptide reads, in one-letter code: GTP 3',8-cyclase (343 aa).

Positions 19 to 244 (PFGRNISYLR…TDLDDSTGGP (226 aa)) constitute a Radical SAM core domain. R28 lines the GTP pocket. The [4Fe-4S] cluster site is built by C35 and C39. Y41 serves as a coordination point for S-adenosyl-L-methionine. Residue C42 participates in [4Fe-4S] cluster binding. R77 lines the GTP pocket. G81 contacts S-adenosyl-L-methionine. T111 lines the GTP pocket. Residue S135 coordinates S-adenosyl-L-methionine. K171 lines the GTP pocket. M205 serves as a coordination point for S-adenosyl-L-methionine. 2 residues coordinate [4Fe-4S] cluster: C268 and C271. 273–275 (RVR) serves as a coordination point for GTP. C285 contacts [4Fe-4S] cluster.

This sequence belongs to the radical SAM superfamily. MoaA family. As to quaternary structure, monomer and homodimer. [4Fe-4S] cluster serves as cofactor.

It catalyses the reaction GTP + AH2 + S-adenosyl-L-methionine = (8S)-3',8-cyclo-7,8-dihydroguanosine 5'-triphosphate + 5'-deoxyadenosine + L-methionine + A + H(+). It functions in the pathway cofactor biosynthesis; molybdopterin biosynthesis. Functionally, catalyzes the cyclization of GTP to (8S)-3',8-cyclo-7,8-dihydroguanosine 5'-triphosphate. This is GTP 3',8-cyclase from Nitrobacter winogradskyi (strain ATCC 25391 / DSM 10237 / CIP 104748 / NCIMB 11846 / Nb-255).